A 142-amino-acid chain; its full sequence is Galectin-16 (142 aa).

Residues 6-138 (VPYKLPVSLS…DVSLDSVLVN (133 aa)) form the Galectin domain.

As to expression, predominantly and highly expressed in the placenta where it is localized mainly in the syncytiotrophoblast and in the endothelia of fetal vessels. Also detected in the amnion and chorionic trophoblasts in fetal membranes.

Functionally, binds lactose with high affinity. Strong inducer of T-cell apoptosis. This Homo sapiens (Human) protein is Galectin-16.